The sequence spans 524 residues: Peptide chain release factor 3 (524 aa).

Residues A11 to G278 enclose the tr-type G domain. Residues S20–T27, D88–H92, and N142–D145 contribute to the GTP site.

It belongs to the TRAFAC class translation factor GTPase superfamily. Classic translation factor GTPase family. PrfC subfamily.

It localises to the cytoplasm. Its function is as follows. Increases the formation of ribosomal termination complexes and stimulates activities of RF-1 and RF-2. It binds guanine nucleotides and has strong preference for UGA stop codons. It may interact directly with the ribosome. The stimulation of RF-1 and RF-2 is significantly reduced by GTP and GDP, but not by GMP. In Lacticaseibacillus paracasei (strain ATCC 334 / BCRC 17002 / CCUG 31169 / CIP 107868 / KCTC 3260 / NRRL B-441) (Lactobacillus paracasei), this protein is Peptide chain release factor 3.